The following is a 339-amino-acid chain: tRNA N6-adenosine threonylcarbamoyltransferase (339 aa).

Fe cation-binding residues include His111 and His115. Substrate-binding positions include 134-138 (LVSGG), Asp167, Gly180, and Asn270. Asp298 serves as a coordination point for Fe cation.

Belongs to the KAE1 / TsaD family. It depends on Fe(2+) as a cofactor.

It localises to the cytoplasm. The enzyme catalyses L-threonylcarbamoyladenylate + adenosine(37) in tRNA = N(6)-L-threonylcarbamoyladenosine(37) in tRNA + AMP + H(+). In terms of biological role, required for the formation of a threonylcarbamoyl group on adenosine at position 37 (t(6)A37) in tRNAs that read codons beginning with adenine. Is involved in the transfer of the threonylcarbamoyl moiety of threonylcarbamoyl-AMP (TC-AMP) to the N6 group of A37, together with TsaE and TsaB. TsaD likely plays a direct catalytic role in this reaction. In Alkalilimnicola ehrlichii (strain ATCC BAA-1101 / DSM 17681 / MLHE-1), this protein is tRNA N6-adenosine threonylcarbamoyltransferase.